Here is a 154-residue protein sequence, read N- to C-terminus: Cold shock domain-containing protein C2 (154 aa).

2 disordered regions span residues 1–22 (MTSE…SPVW) and 36–62 (ERGG…SATA). Ser19 carries the phosphoserine modification. The CSD domain maps to 69–136 (VFKGVCKQFS…KFQAVEVVLT (68 aa)).

As to expression, brain-specific. Expression restricted to the pyramidal neurons of the cerebral cortex and in the Purkinje cells of the cerebellum.

It localises to the nucleus. It is found in the cytoplasm. RNA-binding factor which binds specifically to the very 3'-UTR ends of both histone H1 and H3.3 mRNAs, encompassing the polyadenylation signal. Might play a central role in the negative regulation of histone variant synthesis in the developing brain. The chain is Cold shock domain-containing protein C2 (Csdc2) from Rattus norvegicus (Rat).